Reading from the N-terminus, the 84-residue chain is U8-theraphotoxin-Hhn1a (84 aa).

Positions 1–21 (MKVVLLECLVWMMAMMELVSC) are cleaved as a signal peptide. 5 disulfides stabilise this stretch: Cys23–Cys35, Cys29–Cys44, Cys34–Cys67, Cys54–Cys75, and Cys69–Cys81.

Belongs to the AVIT (prokineticin) family. Expressed by the venom gland.

The protein localises to the secreted. The chain is U8-theraphotoxin-Hhn1a from Cyriopagopus hainanus (Chinese bird spider).